The sequence spans 269 residues: Tryptophan synthase alpha chain (269 aa).

Residues Glu49 and Asp60 each act as proton acceptor in the active site.

Belongs to the TrpA family. As to quaternary structure, tetramer of two alpha and two beta chains.

It carries out the reaction (1S,2R)-1-C-(indol-3-yl)glycerol 3-phosphate + L-serine = D-glyceraldehyde 3-phosphate + L-tryptophan + H2O. Its pathway is amino-acid biosynthesis; L-tryptophan biosynthesis; L-tryptophan from chorismate: step 5/5. Functionally, the alpha subunit is responsible for the aldol cleavage of indoleglycerol phosphate to indole and glyceraldehyde 3-phosphate. This chain is Tryptophan synthase alpha chain, found in Actinobacillus pleuropneumoniae serotype 5b (strain L20).